Reading from the N-terminus, the 736-residue chain is NADPH--cytochrome P450 reductase (736 aa).

A topological domain (lumenal) is located at residue Met-1. The chain crosses the membrane as a helical span at residues 2-24; the sequence is AVSSSSDVIVLSVGIILAALYLF. Residues 25–736 are Cytoplasmic-facing; the sequence is REQIFSAAKP…RNRLLLDVWS (712 aa). One can recognise a Flavodoxin-like domain in the interval 66–216; the sequence is IVIFYGSQTG…DYLEWKDGMW (151 aa). FMN is bound by residues 72–77, 123–126, 165–174, and Asp-200; these read SQTGTA, ATYG, and LGNKTYEHYN. The FAD-binding FR-type domain maps to 269–546; sequence KNPYPAPIIA…EGPRGAYKQG (278 aa). Arg-289 provides a ligand contact to NADP(+). Residues 456–459, 474–476, Tyr-480, and 495–498 each bind FAD; these read RYYS, TVV, and GVGS. NADP(+)-binding positions include Thr-577, 648-649, and 659-663; these read SR and KIYVQ. Trp-735 lines the FAD pocket.

The protein belongs to the NADPH--cytochrome P450 reductase family. It in the N-terminal section; belongs to the flavodoxin family. In the C-terminal section; belongs to the flavoprotein pyridine nucleotide cytochrome reductase family. It depends on FAD as a cofactor. FMN is required as a cofactor.

The protein localises to the endoplasmic reticulum membrane. It is found in the mitochondrion outer membrane. It localises to the cell membrane. It catalyses the reaction 2 oxidized [cytochrome P450] + NADPH = 2 reduced [cytochrome P450] + NADP(+) + H(+). Its function is as follows. This enzyme is required for electron transfer from NADP to cytochrome P450 in microsomes. It can also provide electron transfer to heme oxygenase and cytochrome B5. Involved in ergosterol biosynthesis. The polypeptide is NADPH--cytochrome P450 reductase (CPR) (Phanerodontia chrysosporium (White-rot fungus)).